A 252-amino-acid chain; its full sequence is Imidazole glycerol phosphate synthase subunit HisF (252 aa).

Residues aspartate 11 and aspartate 130 contribute to the active site.

It belongs to the HisA/HisF family. Heterodimer of HisH and HisF.

Its subcellular location is the cytoplasm. It carries out the reaction 5-[(5-phospho-1-deoxy-D-ribulos-1-ylimino)methylamino]-1-(5-phospho-beta-D-ribosyl)imidazole-4-carboxamide + L-glutamine = D-erythro-1-(imidazol-4-yl)glycerol 3-phosphate + 5-amino-1-(5-phospho-beta-D-ribosyl)imidazole-4-carboxamide + L-glutamate + H(+). The protein operates within amino-acid biosynthesis; L-histidine biosynthesis; L-histidine from 5-phospho-alpha-D-ribose 1-diphosphate: step 5/9. IGPS catalyzes the conversion of PRFAR and glutamine to IGP, AICAR and glutamate. The HisF subunit catalyzes the cyclization activity that produces IGP and AICAR from PRFAR using the ammonia provided by the HisH subunit. This chain is Imidazole glycerol phosphate synthase subunit HisF, found in Lacticaseibacillus casei (strain BL23) (Lactobacillus casei).